The following is a 384-amino-acid chain: Neuropeptide Y receptor type 1 (384 aa).

Over 1 to 44 the chain is Extracellular; the sequence is MNSTLFSQVENHSVHSNFSEKNAQLLAFENDDCHLPLAMIFTLA. N-linked (GlcNAc...) asparagine glycans are attached at residues N2, N11, and N17. Residues 45-65 form a helical membrane-spanning segment; that stretch reads LAYGAVIILGVSGNLALIIII. Over 66–76 the chain is Cytoplasmic; it reads LKQKEMRNVTN. A helical membrane pass occupies residues 77-97; it reads ILIVNLSFSDLLVAIMCLPFT. Topologically, residues 98 to 116 are extracellular; the sequence is FVYTLMDHWVFGEAMCKLN. An intrachain disulfide couples C113 to C198. A helical membrane pass occupies residues 117–137; the sequence is PFVQCVSITVSIFSLVLIAVE. Over 138 to 154 the chain is Cytoplasmic; the sequence is RHQLIINPRGWRPNNRH. A helical transmembrane segment spans residues 155 to 175; it reads AYVGIAVIWVLAVASSLPFLI. Residues 176 to 211 are Extracellular-facing; the sequence is YQVMTDEPFQNVTLDAYKDKYVCFDQFPSDSHRLSY. A helical membrane pass occupies residues 212–232; it reads TTLLLVLQYFGPLCFIFICYF. Residues 233-260 are Cytoplasmic-facing; that stretch reads KIYIRLKRRNNMMDKMRDNKYRSSETKR. The helical transmembrane segment at 261–281 threads the bilayer; the sequence is INIMLLSIVVAFAVCWLPLTI. Residues 282 to 299 are Extracellular-facing; it reads FNTVFDWNHQIIATCNHN. A helical transmembrane segment spans residues 300–320; the sequence is LLFLLCHLTAMISTCVNPIFY. Residues 321-384 lie on the Cytoplasmic side of the membrane; sequence GFLNKNFQRD…INNNDDNEKI (64 aa). A lipid anchor (S-palmitoyl cysteine) is attached at C338. S368 is subject to Phosphoserine.

Belongs to the G-protein coupled receptor 1 family.

The protein resides in the cell membrane. Its function is as follows. Receptor for neuropeptide Y and peptide YY. The rank order of affinity of this receptor for pancreatic polypeptides is NPY &gt; [Pro-34] PYY, PYY and [Leu-31, Pro-34] NPY &gt; NPY (2-36) &gt; [Ile-31, Gln-34] PP and PYY (3-36) &gt; PP &gt; NPY free acid. The sequence is that of Neuropeptide Y receptor type 1 (NPY1R) from Homo sapiens (Human).